A 156-amino-acid polypeptide reads, in one-letter code: SsrA-binding protein (156 aa).

Belongs to the SmpB family.

The protein resides in the cytoplasm. Required for rescue of stalled ribosomes mediated by trans-translation. Binds to transfer-messenger RNA (tmRNA), required for stable association of tmRNA with ribosomes. tmRNA and SmpB together mimic tRNA shape, replacing the anticodon stem-loop with SmpB. tmRNA is encoded by the ssrA gene; the 2 termini fold to resemble tRNA(Ala) and it encodes a 'tag peptide', a short internal open reading frame. During trans-translation Ala-aminoacylated tmRNA acts like a tRNA, entering the A-site of stalled ribosomes, displacing the stalled mRNA. The ribosome then switches to translate the ORF on the tmRNA; the nascent peptide is terminated with the 'tag peptide' encoded by the tmRNA and targeted for degradation. The ribosome is freed to recommence translation, which seems to be the essential function of trans-translation. The protein is SsrA-binding protein of Desulfitobacterium hafniense (strain DSM 10664 / DCB-2).